The following is a 123-amino-acid chain: Large ribosomal subunit protein uL29 (123 aa).

It belongs to the universal ribosomal protein uL29 family. Component of the large ribosomal subunit.

The protein resides in the cytoplasm. Its function is as follows. Component of the large ribosomal subunit. The ribosome is a large ribonucleoprotein complex responsible for the synthesis of proteins in the cell. Plays an essential role in early embryonic development. May act as a haploinsufficient tumor suppressor. The polypeptide is Large ribosomal subunit protein uL29 (rpl35) (Danio rerio (Zebrafish)).